A 345-amino-acid chain; its full sequence is Phosphoribosylformylglycinamidine cyclo-ligase (345 aa).

It belongs to the AIR synthase family.

It localises to the cytoplasm. It catalyses the reaction 2-formamido-N(1)-(5-O-phospho-beta-D-ribosyl)acetamidine + ATP = 5-amino-1-(5-phospho-beta-D-ribosyl)imidazole + ADP + phosphate + H(+). It functions in the pathway purine metabolism; IMP biosynthesis via de novo pathway; 5-amino-1-(5-phospho-D-ribosyl)imidazole from N(2)-formyl-N(1)-(5-phospho-D-ribosyl)glycinamide: step 2/2. The sequence is that of Phosphoribosylformylglycinamidine cyclo-ligase from Shewanella baltica (strain OS185).